A 423-amino-acid polypeptide reads, in one-letter code: Glycine amidinotransferase, mitochondrial (423 aa).

The transit peptide at 1-43 (MLRVRCLRGGSRGAEAVHYIGSRLGRTLTGWVQRTFQSTQAAT) directs the protein to the mitochondrion. A disordered region spans residues 43-63 (TASSRNSFAADDKATEPLPKD). Residues serine 46 and serine 49 each carry the phosphoserine modification. Over residues 52 to 61 (ADDKATEPLP) the composition is skewed to basic and acidic residues. Residue aspartate 170 participates in arginine binding. Active-site residues include aspartate 254 and histidine 303. 4 residues coordinate arginine: aspartate 305, arginine 322, serine 354, and serine 355. Lysine 385 carries the N6-acetyllysine modification. Residue cysteine 407 is the Amidino-cysteine intermediate of the active site.

This sequence belongs to the amidinotransferase family. Homodimer.

It localises to the mitochondrion inner membrane. The enzyme catalyses L-arginine + glycine = guanidinoacetate + L-ornithine. It catalyses the reaction 4-aminobutanoate + L-arginine = 4-guanidinobutanoate + L-ornithine. It carries out the reaction beta-alanine + L-arginine = 3-guanidinopropanoate + L-ornithine. The catalysed reaction is taurine + L-arginine = taurocyamine + L-ornithine. The protein operates within amine and polyamine biosynthesis; creatine biosynthesis; creatine from L-arginine and glycine: step 1/2. Functionally, transamidinase that catalyzes the transfer of the amidino group of L-arginine onto the amino moiety of acceptor metabolites such as glycine, beta-alanine, gamma-aminobutyric acid (GABA) and taurine yielding the corresponding guanidine derivatives. Catalyzes the rate-limiting step of creatine biosynthesis, namely the transfer of the amidino group from L-arginine to glycine to generate guanidinoacetate, which is then methylated by GAMT to form creatine. Provides creatine as a source for ATP generation in tissues with high energy demands, in particular skeletal muscle, heart and brain. The polypeptide is Glycine amidinotransferase, mitochondrial (GATM) (Macaca fascicularis (Crab-eating macaque)).